A 631-amino-acid chain; its full sequence is RING finger protein 112 (631 aa).

An RING-type zinc finger spans residues 57-98; sequence CSICLERLREPISLDCGHDFCIRCFSTHRIPGCELPCCPECR. The interaction with ZBTB16 stretch occupies residues 131–631; sequence AVRAERLLLV…GDREPLLQEE (501 aa). The GB1/RHD3-type G domain maps to 166–397; sequence DTPVCLLAVL…YISDVLSTAP (232 aa). 317 to 318 provides a ligand contact to GTP; sequence RD. The next 2 membrane-spanning stretches (helical) occupy residues 547 to 567 and 580 to 600; these read LAAVGGAVGAGLMGLAGGVVG and GMVAAGAAVGATGAAVVGGGV.

It belongs to the TRAFAC class dynamin-like GTPase superfamily. GB1/RHD3 GTPase family. GB1 subfamily. In terms of assembly, self-associates. Interacts with SP1 in an oxidative stress-regulated manner. Interacts with SIGMAR1 in an oxidative stress-regulated manner. Interacts with ZBTB16 (via C2H2-type zinc finger domains 1 and 2). In terms of processing, auto-ubiquitinated. Predominantly expressed in brain.

Its subcellular location is the membrane. The protein localises to the cytoplasm. It is found in the nucleus. It localises to the nuclear body. The protein resides in the nucleoplasm. Its subcellular location is the endosome. The protein localises to the cytoplasmic vesicle. It is found in the secretory vesicle. It localises to the synaptic vesicle. The protein resides in the postsynaptic density. Its subcellular location is the perikaryon. The protein localises to the cell projection. It is found in the neuron projection. It catalyses the reaction S-ubiquitinyl-[E2 ubiquitin-conjugating enzyme]-L-cysteine + [acceptor protein]-L-lysine = [E2 ubiquitin-conjugating enzyme]-L-cysteine + N(6)-ubiquitinyl-[acceptor protein]-L-lysine.. It functions in the pathway protein modification; protein ubiquitination. Its function is as follows. E3 ubiquitin-protein ligase that plays an important role in neuronal differentiation, including neurogenesis and gliogenesis, during brain development. During embryonic development initiates neuronal differentiation by inducing cell cycle arrest at the G0/G1 phase through up-regulation of cell-cycle regulatory proteins. Plays a role not only in the fetal period during the development of the nervous system, but also in the adult brain, where it is involved in the maintenance of neural functions and protection of the nervous tissue cells from oxidative stress-induced damage. Exhibits GTPase and E3 ubiquitin-protein ligase activities. Regulates dendritic spine density and synaptic neurotransmission; its ability to hydrolyze GTP is involved in the maintenance of dendritic spine density. The protein is RING finger protein 112 (Rnf112) of Rattus norvegicus (Rat).